Reading from the N-terminus, the 1119-residue chain is Transcriptional repressor NF-X1 homolog (1119 aa).

The tract at residues 1–214 is disordered; that stretch reads MADTEGTSSS…EPLTEEETKI (214 aa). Positions 7-17 are enriched in low complexity; the sequence is TSSSIPTSTNS. Positions 18 to 29 are enriched in basic residues; that stretch reads SRHRASRGRGGR. Positions 84-98 are enriched in low complexity; sequence ANFTFNPNAATFNPA. Residues 113-128 are compositionally biased toward polar residues; that stretch reads GASTHSNQNSRQQEPS. The segment covering 143–154 has biased composition (basic and acidic residues); it reads RQLEIQEQRGDS. Residues 157 to 167 show a composition bias toward low complexity; that stretch reads QNQSRQNNRNQ. Over residues 174–193 the composition is skewed to polar residues; it reads ANQQNKSVQNPSRNPGNSRR. A compositionally biased stretch (basic and acidic residues) spans 198 to 214; the sequence is RRREQKEEPLTEEETKI. Residues 235–287 form an RING-type; degenerate zinc finger; it reads CAICYTRITTRQGVWSCKTCYHIFHISTGCITDWARSSRDKEGANTWRCPTCQ. NF-X1-type zinc fingers lie at residues 330–348, 383–402, 439–458, 500–523, 565–584, 592–611, 649–668, 703–726, and 735–756; these read CPHP…ECKL, CGQH…ECTV, CGIH…ECET, CGTP…PCNL, CGMH…FCLQ, CGIH…PCLQ, CDHS…PCTQ, CGVH…KCTK, and CEHP…PCKA. Residues 867–937 enclose the R3H domain; the sequence is IDFVKSVEKI…KRSIVLTAVR (71 aa). 2 disordered regions span residues 1024–1047 and 1078–1119; these read VDSD…PKDW and AAKK…ELLE. Polar residues predominate over residues 1032–1041; sequence NVPTTSNLVS. Over residues 1086-1097 the composition is skewed to acidic residues; it reads PTWEDQCDEDAP.

Belongs to the NFX1 family.

It is found in the nucleus. In terms of biological role, may play a role in transcription regulation. The sequence is that of Transcriptional repressor NF-X1 homolog (nfx-1) from Caenorhabditis elegans.